The chain runs to 479 residues: UDP-N-acetylmuramoyl-L-alanyl-D-glutamate--2,6-diaminopimelate ligase (479 aa).

UDP-N-acetyl-alpha-D-muramoyl-L-alanyl-D-glutamate is bound at residue serine 21. 98-104 (GTNGKSS) contacts ATP. UDP-N-acetyl-alpha-D-muramoyl-L-alanyl-D-glutamate-binding positions include 144 to 145 (TT), serine 171, glutamine 177, and arginine 179. An N6-carboxylysine modification is found at lysine 211. Residues arginine 372, 396 to 399 (DNPR), glycine 446, and glutamate 450 each bind meso-2,6-diaminopimelate. Positions 396–399 (DNPR) match the Meso-diaminopimelate recognition motif motif.

Belongs to the MurCDEF family. MurE subfamily. Mg(2+) is required as a cofactor. Carboxylation is probably crucial for Mg(2+) binding and, consequently, for the gamma-phosphate positioning of ATP.

Its subcellular location is the cytoplasm. It catalyses the reaction UDP-N-acetyl-alpha-D-muramoyl-L-alanyl-D-glutamate + meso-2,6-diaminopimelate + ATP = UDP-N-acetyl-alpha-D-muramoyl-L-alanyl-gamma-D-glutamyl-meso-2,6-diaminopimelate + ADP + phosphate + H(+). Its pathway is cell wall biogenesis; peptidoglycan biosynthesis. Functionally, catalyzes the addition of meso-diaminopimelic acid to the nucleotide precursor UDP-N-acetylmuramoyl-L-alanyl-D-glutamate (UMAG) in the biosynthesis of bacterial cell-wall peptidoglycan. The sequence is that of UDP-N-acetylmuramoyl-L-alanyl-D-glutamate--2,6-diaminopimelate ligase from Rickettsia rickettsii.